We begin with the raw amino-acid sequence, 511 residues long: Spermatogenesis-associated protein 2 (511 aa).

Residues 77–149 enclose the PUB domain; it reads ALHCAFSMLE…AYKLKELVES (73 aa). Positions 320-337 match the PIM motif motif; it reads TYFPTQDDVDLYTDSEPR.

It belongs to the SPATA2 family. As to quaternary structure, interacts (via the PIM motif) with RNF31/HOIP (via the PUB domain); the interaction is direct. Interacts (via the PUB domain) with CYLD; the interaction is direct. As to expression, expressed in the testis and to a lesser extent in the brain, while skeletal muscle and kidney show weak expression.

Its subcellular location is the cytoplasm. It localises to the nucleus. Functionally, bridging factor that mediates the recruitment of CYLD to the LUBAC complex, thereby regulating TNF-alpha-induced necroptosis. Acts as a direct binding intermediate that bridges RNF31/HOIP, the catalytic subunit of the LUBAC complex, and the deubiquitinase (CYLD), thereby recruiting CYLD to the TNF-R1 signaling complex (TNF-RSC). Required to activate the 'Met-1'- (linear) and 'Lys-63'-linked deubiquitinase activities of CYLD. Controls the kinase activity of RIPK1 and TNF-alpha-induced necroptosis by promoting 'Met-1'-linked deubiquitination of RIPK1 by CYLD. This is Spermatogenesis-associated protein 2 from Rattus norvegicus (Rat).